We begin with the raw amino-acid sequence, 37 residues long: Large ribosomal subunit protein bL36c (37 aa).

It belongs to the bacterial ribosomal protein bL36 family.

It localises to the plastid. The protein localises to the chloroplast. This Pisum sativum (Garden pea) protein is Large ribosomal subunit protein bL36c (rpl36).